Here is a 362-residue protein sequence, read N- to C-terminus: 3-dehydroquinate synthase (362 aa).

Residues 74–79, 108–112, 132–133, Lys145, Lys154, and 172–175 contribute to the NAD(+) site; these read DGEGYK, GVIGD, TT, and TLDT. Residues Glu187, His250, and His267 each contribute to the Zn(2+) site.

Belongs to the sugar phosphate cyclases superfamily. Dehydroquinate synthase family. Co(2+) is required as a cofactor. The cofactor is Zn(2+). It depends on NAD(+) as a cofactor.

The protein resides in the cytoplasm. It carries out the reaction 7-phospho-2-dehydro-3-deoxy-D-arabino-heptonate = 3-dehydroquinate + phosphate. The protein operates within metabolic intermediate biosynthesis; chorismate biosynthesis; chorismate from D-erythrose 4-phosphate and phosphoenolpyruvate: step 2/7. Functionally, catalyzes the conversion of 3-deoxy-D-arabino-heptulosonate 7-phosphate (DAHP) to dehydroquinate (DHQ). In Geobacter sp. (strain M21), this protein is 3-dehydroquinate synthase.